A 136-amino-acid chain; its full sequence is Cytochrome c oxidase subunit 13, mitochondrial (136 aa).

The transit peptide at 1 to 29 (MFAQRQMFFARLAANLRAPAVRQTVQRRF) directs the protein to the mitochondrion. Residues 30-62 (ASTPANESGKNAFVREREAVKQHAAETTELWRK) are Mitochondrial matrix-facing. A helical membrane pass occupies residues 63–83 (ISLYGIPPALALAGYNAYTLY). At 84–136 (NEHWEHWSHLPPLEERTEYPYQNIRTRNYPWGDGDKTLFWNESVNYHNRDKVT) the chain is on the mitochondrial intermembrane side.

The protein belongs to the cytochrome c oxidase subunit 6A family. Component of the cytochrome c oxidase (complex IV, CIV), a multisubunit enzyme composed of 11 subunits. The complex is composed of a catalytic core of 3 subunits Cox1, Cox2 and Cox3, encoded in the mitochondrial DNA, and 8 supernumerary subunits Cox4, Cox5a/Cox5, Cox6, Cox7, Cox8, Cox7a/Cox9, Cox6b/Cox12 and Cox6a/Cox13, which are encoded in the nuclear genome. The complex exists as a monomer or a dimer and forms respiratory supercomplexes (SCs) in the inner mitochondrial membrane with NADH-ubiquinone oxidoreductase (complex I, CI) and ubiquinol-cytochrome c oxidoreductase (cytochrome b-c1 complex, complex III, CIII), resulting in various different assemblies (supercomplexes I(1)IV(1), I(1)III(3)IV(2), III(2)IV(1) and III(2)IV(2) as well as larger supercomplexes of compositions like I(1)III(2)IV(5-6)). Cox6a/Cox13 was not present in the cryo-EM structure. It may be involved in complex IV dimer formation and might not be always expressed. This would explain its absence in the map of the isolated monomer.

The protein localises to the mitochondrion inner membrane. It functions in the pathway energy metabolism; oxidative phosphorylation. Component of the cytochrome c oxidase, the last enzyme in the mitochondrial electron transport chain which drives oxidative phosphorylation. The respiratory chain contains 3 multisubunit complexes succinate dehydrogenase (complex II, CII), ubiquinol-cytochrome c oxidoreductase (cytochrome b-c1 complex, complex III, CIII) and cytochrome c oxidase (complex IV, CIV), that cooperate to transfer electrons derived from NADH and succinate to molecular oxygen, creating an electrochemical gradient over the inner membrane that drives transmembrane transport and the ATP synthase. Cytochrome c oxidase is the component of the respiratory chain that catalyzes the reduction of oxygen to water. Electrons originating from reduced cytochrome c in the intermembrane space (IMS) are transferred via the dinuclear copper A center (CU(A)) of Cox2 and heme A of Cox1 to the active site in Cox1, a binuclear center (BNC) formed by heme A3 and copper B (CU(B)). The BNC reduces molecular oxygen to 2 water molecules using 4 electrons from cytochrome c in the IMS and 4 protons from the mitochondrial matrix. The sequence is that of Cytochrome c oxidase subunit 13, mitochondrial (eat-5) from Neurospora crassa (strain ATCC 24698 / 74-OR23-1A / CBS 708.71 / DSM 1257 / FGSC 987).